Reading from the N-terminus, the 249-residue chain is uncharacterized protein (249 aa).

A helical transmembrane segment spans residues 3–23 (WYWIGLLIVVVLFLLSAVRIV).

Belongs to the band 7/mec-2 family.

The protein localises to the membrane. This is an uncharacterized protein from Archaeoglobus fulgidus (strain ATCC 49558 / DSM 4304 / JCM 9628 / NBRC 100126 / VC-16).